Reading from the N-terminus, the 717-residue chain is Radial spoke head protein 6 homolog A (717 aa).

Disordered regions lie at residues 1-65 (MGDL…SLSQ), 503-523 (SEEE…YEEN), 563-588 (TEEE…QEVG), and 672-717 (GPEI…ETDD). 3 stretches are compositionally biased toward acidic residues: residues 503-513 (SEEEGDEEEEG), 564-585 (EEEE…EVEQ), and 700-717 (TEEE…ETDD).

It belongs to the flagellar radial spoke RSP4/6 family. Component of the axonemal radial spoke 1 (RS1) and 2 (RS2) complexes, at least composed of spoke head proteins RSPH1, RSPH3, RSPH9 and the cilia-specific component RSPH4A or sperm-specific component RSPH6A, spoke stalk proteins RSPH14, DNAJB13, DYDC1, ROPN1L and NME5, and the RS1 complex-specific anchor protein IQUB. Interacts with RSPH1. Interacts with RSPH3B. Interacts with RSPH4A. Interacts with RSPH9. Interacts with RSPH10B. Post-translationally, phosphorylated by PKA. Phosphorylation increases in capacitated sperm.

The protein localises to the cytoplasm. The protein resides in the cytoskeleton. It localises to the flagellum axoneme. In terms of biological role, functions as part of radial spoke complexes in the axoneme of sperm flagella that play an important part in motility. The triple radial spokes (RS1, RS2 and RS3) are required to modulate beating of the sperm flagellum. The sequence is that of Radial spoke head protein 6 homolog A from Homo sapiens (Human).